Here is a 279-residue protein sequence, read N- to C-terminus: Bifunctional protein FolD (279 aa).

Residues 164–166, Ser-189, and Ile-230 each bind NADP(+); that span reads GRS.

It belongs to the tetrahydrofolate dehydrogenase/cyclohydrolase family. Homodimer.

The enzyme catalyses (6R)-5,10-methylene-5,6,7,8-tetrahydrofolate + NADP(+) = (6R)-5,10-methenyltetrahydrofolate + NADPH. It carries out the reaction (6R)-5,10-methenyltetrahydrofolate + H2O = (6R)-10-formyltetrahydrofolate + H(+). It functions in the pathway one-carbon metabolism; tetrahydrofolate interconversion. Functionally, catalyzes the oxidation of 5,10-methylenetetrahydrofolate to 5,10-methenyltetrahydrofolate and then the hydrolysis of 5,10-methenyltetrahydrofolate to 10-formyltetrahydrofolate. This is Bifunctional protein FolD from Agathobacter rectalis (strain ATCC 33656 / DSM 3377 / JCM 17463 / KCTC 5835 / VPI 0990) (Eubacterium rectale).